The sequence spans 253 residues: 3-deoxy-manno-octulosonate cytidylyltransferase (253 aa).

This sequence belongs to the KdsB family.

It localises to the cytoplasm. It catalyses the reaction 3-deoxy-alpha-D-manno-oct-2-ulosonate + CTP = CMP-3-deoxy-beta-D-manno-octulosonate + diphosphate. It functions in the pathway nucleotide-sugar biosynthesis; CMP-3-deoxy-D-manno-octulosonate biosynthesis; CMP-3-deoxy-D-manno-octulosonate from 3-deoxy-D-manno-octulosonate and CTP: step 1/1. The protein operates within bacterial outer membrane biogenesis; lipopolysaccharide biosynthesis. Functionally, activates KDO (a required 8-carbon sugar) for incorporation into bacterial lipopolysaccharide in Gram-negative bacteria. This chain is 3-deoxy-manno-octulosonate cytidylyltransferase, found in Acidithiobacillus ferrooxidans (strain ATCC 23270 / DSM 14882 / CIP 104768 / NCIMB 8455) (Ferrobacillus ferrooxidans (strain ATCC 23270)).